The following is a 447-amino-acid chain: Putative branched-chain amino acid carrier protein SERP0977 (447 aa).

Helical transmembrane passes span T5–P25, I40–L60, P74–I94, G114–L134, I143–F163, G193–I213, I229–I249, L290–V310, I317–L337, V350–A370, I382–I402, and L417–V437.

Belongs to the branched chain amino acid transporter family.

The protein resides in the cell membrane. Its function is as follows. Component of the transport system for branched-chain amino acids (leucine, isoleucine and valine), which is coupled to a proton motive force. This is Putative branched-chain amino acid carrier protein SERP0977 from Staphylococcus epidermidis (strain ATCC 35984 / DSM 28319 / BCRC 17069 / CCUG 31568 / BM 3577 / RP62A).